Reading from the N-terminus, the 1009-residue chain is DNA polymerase catalytic subunit (1009 aa).

It belongs to the DNA polymerase type-B family.

The protein resides in the host nucleus. It catalyses the reaction DNA(n) + a 2'-deoxyribonucleoside 5'-triphosphate = DNA(n+1) + diphosphate. This chain is DNA polymerase catalytic subunit (9), found in Saimiri sciureus (Common squirrel monkey).